A 1043-amino-acid polypeptide reads, in one-letter code: Isoleucine--tRNA ligase (1043 aa).

Positions 49 to 59 (PFATGLPHYGH) match the 'HIGH' region motif. The 'KMSKS' region signature appears at 592 to 596 (KMSKR). K595 contributes to the ATP binding site.

This sequence belongs to the class-I aminoacyl-tRNA synthetase family. IleS type 2 subfamily. As to quaternary structure, monomer. It depends on Zn(2+) as a cofactor.

The protein localises to the cytoplasm. It carries out the reaction tRNA(Ile) + L-isoleucine + ATP = L-isoleucyl-tRNA(Ile) + AMP + diphosphate. Catalyzes the attachment of isoleucine to tRNA(Ile). As IleRS can inadvertently accommodate and process structurally similar amino acids such as valine, to avoid such errors it has two additional distinct tRNA(Ile)-dependent editing activities. One activity is designated as 'pretransfer' editing and involves the hydrolysis of activated Val-AMP. The other activity is designated 'posttransfer' editing and involves deacylation of mischarged Val-tRNA(Ile). The polypeptide is Isoleucine--tRNA ligase (Chlamydia abortus (strain DSM 27085 / S26/3) (Chlamydophila abortus)).